We begin with the raw amino-acid sequence, 630 residues long: MGRIRKLDDLLANKIAAGEVVERPASVVKELVENAIDAHSTVINIELEEAGMAKIRVIDNGDGMEEDDCLLAFERHATSKIHDEHDLFRIRTLGFRGEALPSIASVSEVELTTGTGSGPGTKLVLQGGALVSRERAAGRKGTDITVSNLFFNTPARLKYMKTIHTELGHAADVVNRLALAHPDVSFRLRHQGKTLLATNGSGDVRHVLAAIYGAETARQMIPIEAESLDFTIRGYISPPDVTRASRNYISLVVNGRYVRSVPLMKAIEAGYHTLLPIGRYPIVFLSIEMDPVLVDVNVHPAKLEVRFSKEAELNELVTDAIRQAFRKRTLIPSVSADSKMAKPKAEQAAWTFTHRVREPSVLSSDIGGGEDATAPLAPLTGDAPAERPSAAVQTDECGILDEHGPAFERKQEEEVGEERCSPRLPTDGQAEDKAAADRLPPLYPIGQLHGTYILAENEHGLYMIDQHAAQERINYEYFREKLGEATKEVQELLVPLMFEYPADEYERIAACRDELARCGVFLEPFGPRAFLVRSHPTWFPKGREREIIEEMIEQVLAAKTVDIKQLREQAAILMSCKRAIKANQHLRQDELFALLEALRQTTDPFTCPHGRPIIVHFSTYEIEKLFKRVM.

Disordered stretches follow at residues 361–386 and 407–431; these read VLSSDIGGGEDATAPLAPLTGDAPAE and FERKQEEEVGEERCSPRLPTDGQAE. Residues 407–421 are compositionally biased toward basic and acidic residues; it reads FERKQEEEVGEERCS.

Belongs to the DNA mismatch repair MutL/HexB family.

This protein is involved in the repair of mismatches in DNA. It is required for dam-dependent methyl-directed DNA mismatch repair. May act as a 'molecular matchmaker', a protein that promotes the formation of a stable complex between two or more DNA-binding proteins in an ATP-dependent manner without itself being part of a final effector complex. In Geobacillus kaustophilus (strain HTA426), this protein is DNA mismatch repair protein MutL.